The sequence spans 126 residues: S-adenosylmethionine decarboxylase proenzyme (126 aa).

S63 functions as the Schiff-base intermediate with substrate; via pyruvic acid in the catalytic mechanism. Residue S63 is modified to Pyruvic acid (Ser); by autocatalysis. H68 (proton acceptor; for processing activity) is an active-site residue. Catalysis depends on C83, which acts as the Proton donor; for catalytic activity.

It belongs to the prokaryotic AdoMetDC family. Type 1 subfamily. Heterotetramer of two alpha and two beta chains arranged as a dimer of alpha/beta heterodimers. It depends on pyruvate as a cofactor. In terms of processing, is synthesized initially as an inactive proenzyme. Formation of the active enzyme involves a self-maturation process in which the active site pyruvoyl group is generated from an internal serine residue via an autocatalytic post-translational modification. Two non-identical subunits are generated from the proenzyme in this reaction, and the pyruvate is formed at the N-terminus of the alpha chain, which is derived from the carboxyl end of the proenzyme. The post-translation cleavage follows an unusual pathway, termed non-hydrolytic serinolysis, in which the side chain hydroxyl group of the serine supplies its oxygen atom to form the C-terminus of the beta chain, while the remainder of the serine residue undergoes an oxidative deamination to produce ammonia and the pyruvoyl group blocking the N-terminus of the alpha chain.

The catalysed reaction is S-adenosyl-L-methionine + H(+) = S-adenosyl 3-(methylsulfanyl)propylamine + CO2. It participates in amine and polyamine biosynthesis; S-adenosylmethioninamine biosynthesis; S-adenosylmethioninamine from S-adenosyl-L-methionine: step 1/1. Functionally, catalyzes the decarboxylation of S-adenosylmethionine to S-adenosylmethioninamine (dcAdoMet), the propylamine donor required for the synthesis of the polyamines spermine and spermidine from the diamine putrescine. The protein is S-adenosylmethionine decarboxylase proenzyme of Clostridium tetani (strain Massachusetts / E88).